A 731-amino-acid chain; its full sequence is E3 ubiquitin-protein ligase COP1 (731 aa).

The disordered stretch occupies residues 1 to 40; it reads MSGSRQAGSGSAGTSPGSSAASSVTSASSSLSSSPSPPSV. Positions 109–113 match the Nuclear localization signal 1 motif; that stretch reads GSRKR. An RING-type zinc finger spans residues 136–174; it reads CPICFDMIEEAYMTKCGHSFCYKCIHQSLEDNNRCPKCN. Residues 195 to 206 carry the Nuclear localization signal 2 motif; it reads KQKQRFEEKRFK. A coiled-coil region spans residues 233–301; that stretch reads LDLANVNLML…DIKRVEEMSG (69 aa). The Nuclear export signal signature appears at 235 to 245; that stretch reads LANVNLMLELL. A disordered region spans residues 305–325; sequence PVSEDSTVPQFEAPSPSHSSI. WD repeat units lie at residues 419–458, 468–508, 511–551, 553–593, 597–635, 638–677, and 691–729; these read NGSSIVSSIEFDRDCDYFAIAGVTKKIKVYEYDTVIQDAV, TCNS…RSKV, EHEK…SVAS, EAKA…QPIM, GHRKAVSYAKFVSGEEIVSASTDSQLKLWNVGKPYCLRS, GHINEKNFVGLASNGDYIACGSENNSLYLYYKGLSKTLLT, and RKEDDTNEFVSAVCWRALPDGESNVLIAANSQGTIKVLE. The interaction with TRIB1 stretch occupies residues 643–645; it reads KNF.

This sequence belongs to the COP1 family. As to quaternary structure, homodimer. Homodimerization is mediated by the coiled coil domain. Component of the DCX DET1-COP1 ubiquitin ligase complex at least composed of RBX1, DET1, DDB1, CUL4A and COP1. Isoform 2 does not interact with CUL4A but still binds to RBX1, suggesting that the interaction may be mediated by another cullin protein. Isoform 1 and isoform 2 interact with CUL5 but not with CUL1, CUL2 not CUL3. Interacts with bZIP transcription factors JUN, JUNB and JUND but not with FOS, ATF2 nor XBP1. Interacts with p53 (TP53). Interacts with COPS6; this interaction stabilizes RFWD2 through reducing its auto-ubiquitination and decelerating its turnover rate. Interacts with SFN; this interaction leads to SFN degradation. Isoform 4 forms heterodimers with isoform 1, preventing its association with DET1. Interacts with p53/TP53 and MTA1. Interacts with TRIB1 (via C-terminus) and TRIB2. Post-translationally, autoubiquitinated. MTA1 destabilizes it by promoting its autoubiquitination. Ubiquitously expressed at low level. Expressed at higher level in testis, placenta, skeletal muscle and heart.

Its subcellular location is the nucleus speckle. The protein resides in the cytoplasm. The catalysed reaction is S-ubiquitinyl-[E2 ubiquitin-conjugating enzyme]-L-cysteine + [acceptor protein]-L-lysine = [E2 ubiquitin-conjugating enzyme]-L-cysteine + N(6)-ubiquitinyl-[acceptor protein]-L-lysine.. It functions in the pathway protein modification; protein ubiquitination. Its activity is regulated as follows. TRIB1 competes with substrates for RFWD2 binding. E3 ubiquitin-protein ligase that mediates ubiquitination and subsequent proteasomal degradation of target proteins. E3 ubiquitin ligases accept ubiquitin from an E2 ubiquitin-conjugating enzyme in the form of a thioester and then directly transfers the ubiquitin to targeted substrates. Involved in JUN ubiquitination and degradation. Directly involved in p53 (TP53) ubiquitination and degradation, thereby abolishing p53-dependent transcription and apoptosis. Ubiquitinates p53 independently of MDM2 or RCHY1. Probably mediates E3 ubiquitin ligase activity by functioning as the essential RING domain subunit of larger E3 complexes. In contrast, it does not constitute the catalytic RING subunit in the DCX DET1-COP1 complex that negatively regulates JUN, the ubiquitin ligase activity being mediated by RBX1. Involved in 14-3-3 protein sigma/SFN ubiquitination and proteasomal degradation, leading to AKT activation and promotion of cell survival. Ubiquitinates MTA1 leading to its proteasomal degradation. Upon binding to TRIB1, ubiquitinates CEBPA, which lacks a canonical COP1-binding motif. In Homo sapiens (Human), this protein is E3 ubiquitin-protein ligase COP1.